Reading from the N-terminus, the 312-residue chain is Ribosomal RNA small subunit methyltransferase H (312 aa).

S-adenosyl-L-methionine is bound by residues 33–35 (GGH), aspartate 52, phenylalanine 81, aspartate 102, and glutamine 109.

This sequence belongs to the methyltransferase superfamily. RsmH family.

It is found in the cytoplasm. It carries out the reaction cytidine(1402) in 16S rRNA + S-adenosyl-L-methionine = N(4)-methylcytidine(1402) in 16S rRNA + S-adenosyl-L-homocysteine + H(+). Specifically methylates the N4 position of cytidine in position 1402 (C1402) of 16S rRNA. The protein is Ribosomal RNA small subunit methyltransferase H of Leuconostoc mesenteroides subsp. mesenteroides (strain ATCC 8293 / DSM 20343 / BCRC 11652 / CCM 1803 / JCM 6124 / NCDO 523 / NBRC 100496 / NCIMB 8023 / NCTC 12954 / NRRL B-1118 / 37Y).